The primary structure comprises 874 residues: Probable cation-transporting P-type ATPase (874 aa).

At 1-41 (MNSWTGLSEQAAIKSRQEHGANFLPEKKATPFWLLFLQQFK) the chain is on the cytoplasmic side. A helical transmembrane segment spans residues 42–62 (SLVVILLLLASLLSFVVAIVS). Topologically, residues 63–79 (GLRSNWNFNHDLIIEWV) are extracellular. The chain crosses the membrane as a helical span at residues 80 to 100 (QPFIILLTVFANSLIGSIQEF). The Cytoplasmic portion of the chain corresponds to 101–237 (KAQKSASALK…TKLSPLQQKL (137 aa)). The chain crosses the membrane as a helical span at residues 238–257 (EKIGKWFSWFGLGLFAVVFL). Residues 258-275 (VQTALLGFDNFTNNWSIA) lie on the Extracellular side of the membrane. The chain crosses the membrane as a helical span at residues 276-293 (LIGAIALVVAIIPEGLVT). Residues 294-644 (FINVIFALSV…EEGRKTFLTC (351 aa)) are Cytoplasmic-facing. Asp-331 acts as the 4-aspartylphosphate intermediate in catalysis. Mg(2+) is bound by residues Asp-589 and Asp-593. The chain crosses the membrane as a helical span at residues 645 to 664 (KRVLLNLFLTSIAGTVVVLL). At 665–687 (GLFILGQVFKTNLLQQGHDFQVF) the chain is on the extracellular side. Residues 688 to 708 (SPTQLLIINLFVHGFPAVALA) form a helical membrane-spanning segment. Over 709–726 (VQPVKEKLMVGSFSTKNL) the chain is Cytoplasmic. Residues 727-749 (FYNRQGFDLIWQSLFLSFLTLLF) form a helical membrane-spanning segment. Residues 750-770 (YSLGIIYAINNRDLQTSGDLI) are Extracellular-facing. A helical membrane pass occupies residues 771 to 790 (NRAGSTCGFFILGASAALNS). Residues 791–803 (LNLMVDKPLLMTN) lie on the Cytoplasmic side of the membrane. The chain crosses the membrane as a helical span at residues 804 to 826 (PWFFKLVWIGSLASILVFLLIIF). Residues 827-844 (INPLGLVFNVLQDLTNHP) are Extracellular-facing. Residues 845–865 (VLISYSFGGVILYMGMNEVVK) traverse the membrane as a helical segment. The Cytoplasmic portion of the chain corresponds to 866–874 (LIRLGYGNI).

Belongs to the cation transport ATPase (P-type) (TC 3.A.3) family. Type II subfamily.

The protein localises to the cell membrane. The catalysed reaction is ATP + H2O = ADP + phosphate + H(+). Could mediate calcium influx. The sequence is that of Probable cation-transporting P-type ATPase (pacL) from Mycoplasma genitalium (strain ATCC 33530 / DSM 19775 / NCTC 10195 / G37) (Mycoplasmoides genitalium).